Consider the following 218-residue polypeptide: Glutathione S-transferase Y1 (218 aa).

The GST N-terminal domain maps to 2 to 88; it reads PMILGYWNVR…YIARKHNLCG (87 aa). Glutathione is bound by residues 7 to 8, 46 to 50, 59 to 60, and 72 to 73; these read YW, WLNEK, NL, and QS. Residues 90-208 enclose the GST C-terminal domain; sequence TEEERIRVDI…KTSRFLRRPI (119 aa). Residue Tyr-116 coordinates substrate.

The protein belongs to the GST superfamily. Mu family. Homodimer.

It localises to the cytoplasm. It catalyses the reaction RX + glutathione = an S-substituted glutathione + a halide anion + H(+). Functionally, conjugation of reduced glutathione to a wide number of exogenous and endogenous hydrophobic electrophiles. The polypeptide is Glutathione S-transferase Y1 (Cricetulus longicaudatus (Long-tailed dwarf hamster)).